Consider the following 424-residue polypeptide: Adenylosuccinate synthetase (424 aa).

Residues G12–K18 and G40–T42 contribute to the GTP site. D13 functions as the Proton acceptor in the catalytic mechanism. Positions 13 and 40 each coordinate Mg(2+). IMP-binding positions include D13–K16, N38–H41, T130, R144, N220, T235, and R299. The Proton donor role is filled by H41. Substrate is bound at residue V295 to R301. GTP is bound by residues R301, K327–D329, and G412–G414.

This sequence belongs to the adenylosuccinate synthetase family. In terms of assembly, homodimer. Requires Mg(2+) as cofactor.

It is found in the cytoplasm. It carries out the reaction IMP + L-aspartate + GTP = N(6)-(1,2-dicarboxyethyl)-AMP + GDP + phosphate + 2 H(+). It participates in purine metabolism; AMP biosynthesis via de novo pathway; AMP from IMP: step 1/2. Plays an important role in the de novo pathway and in the salvage pathway of purine nucleotide biosynthesis. Catalyzes the first committed step in the biosynthesis of AMP from IMP. The chain is Adenylosuccinate synthetase from Aspergillus fumigatus (strain CBS 144.89 / FGSC A1163 / CEA10) (Neosartorya fumigata).